Reading from the N-terminus, the 466-residue chain is Fumarate hydratase class II (466 aa).

Residues serine 100–threonine 102, arginine 128, histidine 131–aspartate 134, serine 141–asparagine 143, and threonine 189 contribute to the substrate site. The segment covering glycine 122 to asparagine 137 has biased composition (basic and acidic residues). The tract at residues glycine 122–asparagine 143 is disordered. The Proton donor/acceptor role is filled by histidine 190. Serine 320 is an active-site residue. Residues serine 321 and lysine 326 to asparagine 328 contribute to the substrate site.

The protein belongs to the class-II fumarase/aspartase family. Fumarase subfamily. As to quaternary structure, homotetramer.

It localises to the cytoplasm. It carries out the reaction (S)-malate = fumarate + H2O. The protein operates within carbohydrate metabolism; tricarboxylic acid cycle; (S)-malate from fumarate: step 1/1. Involved in the TCA cycle. Catalyzes the stereospecific interconversion of fumarate to L-malate. The sequence is that of Fumarate hydratase class II from Myxococcus xanthus (strain DK1622).